A 530-amino-acid chain; its full sequence is Carbohydrate sulfotransferase 2 (530 aa).

A disordered region spans residues 1 to 20; the sequence is MSRSSPRALPPGALPRPLPA. Residues 1–54 lie on the Cytoplasmic side of the membrane; that stretch reads MSRSSPRALPPGALPRPLPAAPAAVQRALLPPWPRRAGRRWPASPLGMKVFRRK. Residues 8–20 show a composition bias toward pro residues; it reads ALPPGALPRPLPA. The chain crosses the membrane as a helical; Signal-anchor for type II membrane protein span at residues 55–75; sequence ALVLCAGYALLLVLTMLNLLD. Residues 76–530 lie on the Lumenal side of the membrane; the sequence is YKWHKEPLQQ…SKTLLRKPRL (455 aa). The interval 97–128 is disordered; the sequence is GAAGAGWGRPGSPPAAPPRAHSRMDPRTPYRP. A 3'-phosphoadenylyl sulfate-binding site is contributed by 173–179; the sequence is WRSGSSF. Asparagine 243 carries an N-linked (GlcNAc...) asparagine glycan. 3'-phosphoadenylyl sulfate is bound at residue 332 to 340; sequence RDPRAVASS. Asparagine 457 and asparagine 475 each carry an N-linked (GlcNAc...) asparagine glycan.

This sequence belongs to the sulfotransferase 1 family. Gal/GlcNAc/GalNAc subfamily. In terms of assembly, homodimer; disulfide-linked. Homodimerization is not essential for enzyme activity. As to expression, in brain, it is expressed in pyramidal cells in the CA3 subregion of the hippocampus, cerebellar nucleus and Purkinje cells. Expressed in peripheral lymph nodes.

The protein localises to the golgi apparatus. It localises to the trans-Golgi network membrane. It carries out the reaction 3-O-{N-acetyl-beta-D-glucosaminyl-(1-&gt;3)-beta-D-galactosyl-(1-&gt;3)-N-acetyl-alpha-D-galactosaminyl}-L-threonyl-[protein] + 3'-phosphoadenylyl sulfate = 3-O-{6-O-sulfo-N-acetyl-beta-D-glucosaminyl-(1-&gt;3)-beta-D-galactosyl-(1-&gt;3)-N-acetyl-alpha-D-galactosaminyl}-L-threonyl-[protein] + adenosine 3',5'-bisphosphate + H(+). The enzyme catalyses 3-O-{N-acetyl-beta-D-glucosaminyl-(1-&gt;3)-beta-D-galactosyl-(1-&gt;3)-N-acetyl-alpha-D-galactosaminyl}-L-seryl-[protein] + 3'-phosphoadenylyl sulfate = 3-O-{6-O-sulfo-N-acetyl-beta-D-glucosaminyl-(1-&gt;3)-beta-D-galactosyl-(1-&gt;3)-N-acetyl-alpha-D-galactosaminyl}-L-seryl-[protein] + adenosine 3',5'-bisphosphate + H(+). The catalysed reaction is a 3-O-{beta-D-galactosyl-(1-&gt;3)-[N-acetyl-beta-D-glucosaminyl-(1-&gt;6)]-N-acetyl-alpha-D-galactosaminyl}-L-threonyl-[protein] + 3'-phosphoadenylyl sulfate = 3-O-{beta-D-galactosyl-(1-&gt;3)-[6-O-sulfo-N-acetyl-beta-D-glucosaminyl-(1-&gt;6)]-N-acetyl-alpha-D-galactosaminyl}-L-threonyl-[protein] + adenosine 3',5'-bisphosphate + H(+). It catalyses the reaction 3-O-{beta-D-galactosyl-(1-&gt;3)-[N-acetyl-beta-D-glucosaminyl-(1-&gt;6)]-N-acetyl-alpha-D-galactosaminyl}-L-seryl-[protein] + 3'-phosphoadenylyl sulfate = 3-O-{beta-D-galactosyl-(1-&gt;3)-[6-O-sulfo-N-acetyl-beta-D-glucosaminyl-(1-&gt;6)]-N-acetyl-alpha-D-galactosaminyl}-L-seryl-[protein] + adenosine 3',5'-bisphosphate + H(+). It participates in protein modification; carbohydrate sulfation. Sulfotransferase that utilizes 3'-phospho-5'-adenylyl sulfate (PAPS) as sulfonate donor to catalyze the transfer of sulfate to position 6 of non-reducing N-acetylglucosamine (GlcNAc) residues within keratan-like structures on N-linked glycans and within mucin-associated glycans that can ultimately serve as SELL ligands. SELL ligands are present in high endothelial cells (HEVs) and play a central role in lymphocyte homing at sites of inflammation. Participates in biosynthesis of the SELL ligand sialyl 6-sulfo Lewis X and in lymphocyte homing to Peyer patches. Has no activity toward O-linked sugars. Its substrate specificity may be influenced by its subcellular location. Sulfates GlcNAc residues at terminal, non-reducing ends of oligosaccharide chains. This Mus musculus (Mouse) protein is Carbohydrate sulfotransferase 2 (Chst2).